Here is a 227-residue protein sequence, read N- to C-terminus: Adenosylcobinamide-GDP ribazoletransferase (227 aa).

5 helical membrane-spanning segments follow: residues 3 to 23 (CLKAVVAFFTALPVGGAELDF), 26 to 46 (IWATPYLAGLMVGGAGGAVYF), 95 to 115 (GVGGIFAVVALFVLAASARPE), 117 to 137 (WLDYIVTDLYSKALALVVAAY), and 165 to 185 (AVAAWLHPAAFLAATVLSLFF).

The protein belongs to the CobS family. The cofactor is Mg(2+).

The protein resides in the cell membrane. The catalysed reaction is alpha-ribazole + adenosylcob(III)inamide-GDP = adenosylcob(III)alamin + GMP + H(+). The enzyme catalyses alpha-ribazole 5'-phosphate + adenosylcob(III)inamide-GDP = adenosylcob(III)alamin 5'-phosphate + GMP + H(+). It participates in cofactor biosynthesis; adenosylcobalamin biosynthesis; adenosylcobalamin from cob(II)yrinate a,c-diamide: step 7/7. In terms of biological role, joins adenosylcobinamide-GDP and alpha-ribazole to generate adenosylcobalamin (Ado-cobalamin). Also synthesizes adenosylcobalamin 5'-phosphate from adenosylcobinamide-GDP and alpha-ribazole 5'-phosphate. This Pyrobaculum islandicum (strain DSM 4184 / JCM 9189 / GEO3) protein is Adenosylcobinamide-GDP ribazoletransferase.